Reading from the N-terminus, the 148-residue chain is DNA-directed RNA polymerase II subunit GRINL1A, isoforms 4/5 (148 aa).

The segment at 1-66 is disordered; that stretch reads MATPARAPES…AEFGGAAGNV (66 aa). The segment covering 53–66 has biased composition (low complexity); the sequence is GLGAAEFGGAAGNV.

The polypeptide is DNA-directed RNA polymerase II subunit GRINL1A, isoforms 4/5 (POLR2M) (Homo sapiens (Human)).